The following is a 375-amino-acid chain: tRNA-specific 2-thiouridylase MnmA (375 aa).

ATP contacts are provided by residues 7–14 and methionine 33; that span reads GLSGGVDS. Residues 102–104 are interaction with target base in tRNA; the sequence is NPD. Catalysis depends on cysteine 107, which acts as the Nucleophile. Cysteines 107 and 205 form a disulfide. Glycine 132 serves as a coordination point for ATP. Residues 155–157 are interaction with tRNA; sequence KDQ. Cysteine 205 (cysteine persulfide intermediate) is an active-site residue. An interaction with tRNA region spans residues 313–314; it reads RY.

This sequence belongs to the MnmA/TRMU family.

It is found in the cytoplasm. The catalysed reaction is S-sulfanyl-L-cysteinyl-[protein] + uridine(34) in tRNA + AH2 + ATP = 2-thiouridine(34) in tRNA + L-cysteinyl-[protein] + A + AMP + diphosphate + H(+). Its function is as follows. Catalyzes the 2-thiolation of uridine at the wobble position (U34) of tRNA, leading to the formation of s(2)U34. The polypeptide is tRNA-specific 2-thiouridylase MnmA (Phytoplasma australiense).